A 608-amino-acid polypeptide reads, in one-letter code: Dolichyl-diphosphooligosaccharide--protein glycosyltransferase subunit 1 (608 aa).

A signal peptide spans 1–24 (MEAPAVCLLPLLLLLWAWAPAPGR). Residues 25-435 (ASPEALPLVN…VVHYTFNKVL (411 aa)) are Lumenal-facing. K188 is subject to N6-acetyllysine. N-linked (GlcNAc...) asparagine glycosylation occurs at N300. The chain crosses the membrane as a helical span at residues 436-456 (MLQEPLLVVAAFYILFFTVIV). At 457–607 (YVRLDFSITK…VTKIDHILDA (151 aa)) the chain is on the cytoplasmic side. K539 carries the N6-acetyllysine; alternate modification. Residue K539 forms a Glycyl lysine isopeptide (Lys-Gly) (interchain with G-Cter in SUMO2); alternate linkage.

Belongs to the OST1 family. As to quaternary structure, component of the oligosaccharyltransferase (OST) complex. OST exists in two different complex forms which contain common core subunits RPN1, RPN2, OST48, OST4, DAD1 and TMEM258, either STT3A or STT3B as catalytic subunits, and form-specific accessory subunits. STT3A complex assembly occurs through the formation of 3 subcomplexes. Subcomplex 1 contains RPN1 and TMEM258, subcomplex 2 contains the STT3A-specific subunits STT3A, DC2/OSTC, and KCP2 as well as the core subunit OST4, and subcomplex 3 contains RPN2, DAD1, and OST48. The STT3A complex can form stable complexes with the Sec61 complex or with both the Sec61 and TRAP complexes. Interacts with TMEM35A/NACHO. In terms of processing, ubiquitinated by the ECS(ASB11) complex. Ufmylated by UFL1 in response to endoplasmic reticulum stress, promoting reticulophagy of endoplasmic reticulum sheets. As to expression, detected in liver (at protein level).

It localises to the endoplasmic reticulum membrane. It participates in protein modification; protein glycosylation. Functionally, subunit of the oligosaccharyl transferase (OST) complex that catalyzes the initial transfer of a defined glycan (Glc(3)Man(9)GlcNAc(2) in eukaryotes) from the lipid carrier dolichol-pyrophosphate to an asparagine residue within an Asn-X-Ser/Thr consensus motif in nascent polypeptide chains, the first step in protein N-glycosylation. N-glycosylation occurs cotranslationally and the complex associates with the Sec61 complex at the channel-forming translocon complex that mediates protein translocation across the endoplasmic reticulum (ER). All subunits are required for a maximal enzyme activity. The polypeptide is Dolichyl-diphosphooligosaccharide--protein glycosyltransferase subunit 1 (Sus scrofa (Pig)).